Consider the following 359-residue polypeptide: MSLSNNNSNRVAIIGASGYGGLQLMRLLSDHPHFKVTFLGGNKTAGNKWHQIAPFIKSSEDLTVRKADPEDIAEHADFALLSLPNGLSSQLTPELIKRNIRIVDLSADYRYRSLYQWKQVYVKESTKYIRNDDSLCREATYGIPEWNEGDIRKSKLVACPGCFPTASLLPLMPFLKQGLVENEGLIIDAKSGTSGGGREPKEHLLLSECSESIAPYSVLGHRHTSEIEQQATLVSGTPIQLQFTPHLVPMVRGLLSTVYARLRDPGLTAEDCKTVLEAFYRSHSTVEILPVGIYPSTKWARYTNKALLSLQVDKRNGRLILVSVIDNLIKGQAGQAIQNLNIMAGFSHELGLPLTTFYP.

Cys162 is a catalytic residue.

It belongs to the NAGSA dehydrogenase family. Type 1 subfamily.

The protein resides in the cytoplasm. It carries out the reaction N-acetyl-L-glutamate 5-semialdehyde + phosphate + NADP(+) = N-acetyl-L-glutamyl 5-phosphate + NADPH + H(+). The protein operates within amino-acid biosynthesis; L-arginine biosynthesis; N(2)-acetyl-L-ornithine from L-glutamate: step 3/4. In terms of biological role, catalyzes the NADPH-dependent reduction of N-acetyl-5-glutamyl phosphate to yield N-acetyl-L-glutamate 5-semialdehyde. This Prochlorococcus marinus (strain MIT 9211) protein is N-acetyl-gamma-glutamyl-phosphate reductase.